The primary structure comprises 3096 residues: Unconventional myosin-XVB (3096 aa).

Disordered stretches follow at residues 1-330 (MGRN…GPED), 389-489 (RPPE…GWGR), 508-540 (GGMPRASPGGRSPQVPTSPVPGDPFDQEDETPD), and 553-649 (AGRA…GPRL). Low complexity predominate over residues 19 to 33 (ASGEQESGSASADGA). Residues 34–50 (PSRERRSDRGQADRAKP) show a composition bias toward basic and acidic residues. The span at 124 to 143 (RRRRKRKDKGPSARRGRRTP) shows a compositional bias: basic residues. Basic and acidic residues-rich tracts occupy residues 212-222 (DWPHADTRGRE) and 261-288 (TFEDSSRAPRDTGPAKDASDNRAQRGAE). Over residues 307-330 (AVGQVPAAAGEGEAGAAAGAGPED) the composition is skewed to low complexity. Over residues 406–416 (WGRRKPDEGRG) the composition is skewed to basic and acidic residues. Residues 417 to 426 (HGRGSKGRGR) are compositionally biased toward basic residues. Residues 427–489 (GKADEGRGHE…HQRGYEGWGR (63 aa)) are compositionally biased toward basic and acidic residues. One can recognise a Myosin motor domain in the interval 720–1394 (EDMEDLARLR…GWQRLEELRD (675 aa)). 818 to 825 (GHSGSGKT) serves as a coordination point for ATP. Residues 1273–1295 (LEDLIARLGRSHVYFIQCLTPNP) form an actin-binding region. Residues 1414-1443 (RQRVLPRMQARMRGFQARKRYLRRRAALGQ) form the IQ domain. The MyTH4 1 domain occupies 1551–1702 (RPGQPLAKPL…PTQLEWLAGW (152 aa)). 3 disordered regions span residues 1802-1833 (PGIQAPSLPPGPPPGPAPTLPSRDHTGEVQRS), 1963-2026 (MQQR…PKSF), and 2040-2262 (QITV…LPED). The segment covering 1808–1820 (SLPPGPPPGPAPT) has biased composition (pro residues). The segment covering 1963-1980 (MQQRQQQARASEAASQAS) has biased composition (low complexity). Positions 2059-2076 (AQEEEEEEEEEEEQEEQE) are enriched in acidic residues. Residues 2102 to 2116 (APKEAEAEPAKETAA) are compositionally biased toward basic and acidic residues. A compositionally biased stretch (pro residues) spans 2159-2170 (GPVPVPVQPSRP). Over residues 2176-2185 (RKIDPKDEAL) the composition is skewed to basic and acidic residues. Pro residues-rich tracts occupy residues 2199–2217 (MLSPSPGKGPPPAVAPRPK) and 2247–2261 (HTPPPPPAPPLPLPE). The SH3 domain occupies 2481 to 2542 (KDSGYVIALR…PADIVQPAAA (62 aa)). The interval 2548–2567 (SKEQRSGWHKGQLSNGEPGL) is disordered. In terms of domain architecture, MyTH4 2 spans 2643–2789 (YTKAPIQESL…PPPGEMKAFL (147 aa)). The region spanning 2795–3096 (RLLLIHLPGG…ASCTEWPSIN (302 aa)) is the FERM domain.

It belongs to the TRAFAC class myosin-kinesin ATPase superfamily. Myosin family. In terms of tissue distribution, detected in brain, stomach and kidney.

The protein localises to the cytoplasm. This Homo sapiens (Human) protein is Unconventional myosin-XVB.